A 357-amino-acid chain; its full sequence is NADH-quinone oxidoreductase subunit H (357 aa).

8 helical membrane-spanning segments follow: residues 20 to 40, 92 to 112, 127 to 147, 165 to 185, 206 to 226, 254 to 274, 294 to 314, and 329 to 349; these read WLVL…ILCV, ILFV…WAVV, LLYV…AGWA, VSYE…SGSL, FLSW…ISAV, MAFA…SCMA, IPGW…FVWF, and LGWK…AIWM.

The protein belongs to the complex I subunit 1 family. NDH-1 is composed of 14 different subunits. Subunits NuoA, H, J, K, L, M, N constitute the membrane sector of the complex.

The protein resides in the cell inner membrane. It carries out the reaction a quinone + NADH + 5 H(+)(in) = a quinol + NAD(+) + 4 H(+)(out). In terms of biological role, NDH-1 shuttles electrons from NADH, via FMN and iron-sulfur (Fe-S) centers, to quinones in the respiratory chain. The immediate electron acceptor for the enzyme in this species is believed to be ubiquinone. Couples the redox reaction to proton translocation (for every two electrons transferred, four hydrogen ions are translocated across the cytoplasmic membrane), and thus conserves the redox energy in a proton gradient. This subunit may bind ubiquinone. The chain is NADH-quinone oxidoreductase subunit H from Bordetella petrii (strain ATCC BAA-461 / DSM 12804 / CCUG 43448).